Reading from the N-terminus, the 368-residue chain is Protein-glutamate methylesterase/protein-glutamine glutaminase (368 aa).

Residues 9 to 126 form the Response regulatory domain; that stretch reads RVLVVDDSAF…SINMRELKDE (118 aa). Residue Asp-60 is modified to 4-aspartylphosphate. The CheB-type methylesterase domain occupies 161–354; the sequence is SVPARIAVAI…ETVVRAVEMI (194 aa). Catalysis depends on residues Ser-173, His-200, and Asp-296.

The protein belongs to the CheB family. In terms of processing, phosphorylated by CheA. Phosphorylation of the N-terminal regulatory domain activates the methylesterase activity.

The protein resides in the cytoplasm. The enzyme catalyses [protein]-L-glutamate 5-O-methyl ester + H2O = L-glutamyl-[protein] + methanol + H(+). It catalyses the reaction L-glutaminyl-[protein] + H2O = L-glutamyl-[protein] + NH4(+). In terms of biological role, involved in chemotaxis. Part of a chemotaxis signal transduction system that modulates chemotaxis in response to various stimuli. Catalyzes the demethylation of specific methylglutamate residues introduced into the chemoreceptors (methyl-accepting chemotaxis proteins or MCP) by CheR. Also mediates the irreversible deamidation of specific glutamine residues to glutamic acid. This chain is Protein-glutamate methylesterase/protein-glutamine glutaminase, found in Pyrococcus abyssi (strain GE5 / Orsay).